The following is a 128-amino-acid chain: MGSNIVIYFSIIVIVTLNVNGVPASDLFKSVSQYHIPRSKVINKETVTKPLQFQRAICRLLQKLGEETFARLSQSELEAKQLDLIKTCYQANSFGDNENQGHMQRMDRNYYGWMDFGKRAIEDVDYEY.

A signal peptide spans 1 to 22 (MGSNIVIYFSIIVIVTLNVNGV). Positions 23–108 (PASDLFKSVS…NQGHMQRMDR (86 aa)) are excised as a propeptide. Residues Tyr110 and Tyr111 each carry the sulfotyrosine modification. Phenylalanine amide is present on Phe116. A propeptide spanning residues 120–128 (AIEDVDYEY) is cleaved from the precursor.

This sequence belongs to the gastrin/cholecystokinin family. As to expression, expressed in both the gut and the neural ganglion.

The protein localises to the secreted. In Ciona intestinalis (Transparent sea squirt), this protein is Cionin.